The sequence spans 365 residues: tRNA N6-adenosine threonylcarbamoyltransferase (365 aa).

2 residues coordinate Fe cation: H122 and H126. Substrate contacts are provided by residues 147 to 151 (LVSGG), D180, G193, and N293. D321 serves as a coordination point for Fe cation. Residues 340–365 (PNEIDTAARPRWPLSERTPATPEHVS) form a disordered region.

Belongs to the KAE1 / TsaD family. Fe(2+) is required as a cofactor.

Its subcellular location is the cytoplasm. The enzyme catalyses L-threonylcarbamoyladenylate + adenosine(37) in tRNA = N(6)-L-threonylcarbamoyladenosine(37) in tRNA + AMP + H(+). Required for the formation of a threonylcarbamoyl group on adenosine at position 37 (t(6)A37) in tRNAs that read codons beginning with adenine. Is involved in the transfer of the threonylcarbamoyl moiety of threonylcarbamoyl-AMP (TC-AMP) to the N6 group of A37, together with TsaE and TsaB. TsaD likely plays a direct catalytic role in this reaction. This is tRNA N6-adenosine threonylcarbamoyltransferase from Gluconobacter oxydans (strain 621H) (Gluconobacter suboxydans).